Consider the following 1342-residue polypeptide: DNA-directed RNA polymerase subunit beta (1342 aa).

It belongs to the RNA polymerase beta chain family. In terms of assembly, the RNAP catalytic core consists of 2 alpha, 1 beta, 1 beta' and 1 omega subunit. When a sigma factor is associated with the core the holoenzyme is formed, which can initiate transcription.

It carries out the reaction RNA(n) + a ribonucleoside 5'-triphosphate = RNA(n+1) + diphosphate. Functionally, DNA-dependent RNA polymerase catalyzes the transcription of DNA into RNA using the four ribonucleoside triphosphates as substrates. The protein is DNA-directed RNA polymerase subunit beta of Salmonella gallinarum (strain 287/91 / NCTC 13346).